A 336-amino-acid chain; its full sequence is Holliday junction branch migration complex subunit RuvB (336 aa).

The large ATPase domain (RuvB-L) stretch occupies residues M1 to Y180. ATP is bound by residues L18, R19, G60, K63, T64, T65, E127–F129, R170, Y180, and R217. T64 is a binding site for Mg(2+). The tract at residues T181–G251 is small ATPAse domain (RuvB-S). Positions E254–P336 are head domain (RuvB-H). 2 residues coordinate DNA: R309 and R314.

This sequence belongs to the RuvB family. Homohexamer. Forms an RuvA(8)-RuvB(12)-Holliday junction (HJ) complex. HJ DNA is sandwiched between 2 RuvA tetramers; dsDNA enters through RuvA and exits via RuvB. An RuvB hexamer assembles on each DNA strand where it exits the tetramer. Each RuvB hexamer is contacted by two RuvA subunits (via domain III) on 2 adjacent RuvB subunits; this complex drives branch migration. In the full resolvosome a probable DNA-RuvA(4)-RuvB(12)-RuvC(2) complex forms which resolves the HJ.

The protein resides in the cytoplasm. The catalysed reaction is ATP + H2O = ADP + phosphate + H(+). In terms of biological role, the RuvA-RuvB-RuvC complex processes Holliday junction (HJ) DNA during genetic recombination and DNA repair, while the RuvA-RuvB complex plays an important role in the rescue of blocked DNA replication forks via replication fork reversal (RFR). RuvA specifically binds to HJ cruciform DNA, conferring on it an open structure. The RuvB hexamer acts as an ATP-dependent pump, pulling dsDNA into and through the RuvAB complex. RuvB forms 2 homohexamers on either side of HJ DNA bound by 1 or 2 RuvA tetramers; 4 subunits per hexamer contact DNA at a time. Coordinated motions by a converter formed by DNA-disengaged RuvB subunits stimulates ATP hydrolysis and nucleotide exchange. Immobilization of the converter enables RuvB to convert the ATP-contained energy into a lever motion, pulling 2 nucleotides of DNA out of the RuvA tetramer per ATP hydrolyzed, thus driving DNA branch migration. The RuvB motors rotate together with the DNA substrate, which together with the progressing nucleotide cycle form the mechanistic basis for DNA recombination by continuous HJ branch migration. Branch migration allows RuvC to scan DNA until it finds its consensus sequence, where it cleaves and resolves cruciform DNA. This Thermus thermophilus (strain ATCC BAA-163 / DSM 7039 / HB27) protein is Holliday junction branch migration complex subunit RuvB.